The chain runs to 169 residues: Steroid receptor-associated and regulated protein (169 aa).

Interacts with 14-3-3 proteins. Expressed in breast tumors with a higher expression level in estrogen receptor-positive cancers.

Functionally, may regulate the transcriptional function of androgen and estrogen receptors. This chain is Steroid receptor-associated and regulated protein, found in Homo sapiens (Human).